The primary structure comprises 198 residues: Putative transposase InsO for insertion sequence element IS911B (198 aa).

Residues 105 to 198 (AVTEPNQVWC…YCGDTGSGRV (94 aa)) form the Integrase catalytic domain.

Functionally, involved in the transposition of the insertion sequence IS911B. This chain is Putative transposase InsO for insertion sequence element IS911B (insO2), found in Escherichia coli (strain K12).